A 353-amino-acid chain; its full sequence is Biotin synthase (353 aa).

Positions 1-22 are enriched in low complexity; it reads MTACSTTPTTSATSAQPAAGSP. Residues 1–30 are disordered; the sequence is MTACSTTPTTSATSAQPAAGSPLQWHARPS. The 228-residue stretch at 72–299 folds into the Radical SAM core domain; that stretch reads GDIELATLLS…TARVRLSAGR (228 aa). Residues C87, C91, and C94 each contribute to the [4Fe-4S] cluster site. 4 residues coordinate [2Fe-2S] cluster: C131, C162, C222, and R294.

This sequence belongs to the radical SAM superfamily. Biotin synthase family. In terms of assembly, homodimer. The cofactor is [4Fe-4S] cluster. [2Fe-2S] cluster is required as a cofactor.

The enzyme catalyses (4R,5S)-dethiobiotin + (sulfur carrier)-SH + 2 reduced [2Fe-2S]-[ferredoxin] + 2 S-adenosyl-L-methionine = (sulfur carrier)-H + biotin + 2 5'-deoxyadenosine + 2 L-methionine + 2 oxidized [2Fe-2S]-[ferredoxin]. It functions in the pathway cofactor biosynthesis; biotin biosynthesis; biotin from 7,8-diaminononanoate: step 2/2. Catalyzes the conversion of dethiobiotin (DTB) to biotin by the insertion of a sulfur atom into dethiobiotin via a radical-based mechanism. The chain is Biotin synthase from Delftia acidovorans (strain DSM 14801 / SPH-1).